Consider the following 694-residue polypeptide: Elongation factor G (694 aa).

Positions 8-282 (KDYRNIGIMA…AVIDYLPSPV (275 aa)) constitute a tr-type G domain. Residues 17–24 (AHIDAGKT), 81–85 (DTPGH), and 135–138 (NKMD) each bind GTP.

It belongs to the TRAFAC class translation factor GTPase superfamily. Classic translation factor GTPase family. EF-G/EF-2 subfamily.

The protein localises to the cytoplasm. Functionally, catalyzes the GTP-dependent ribosomal translocation step during translation elongation. During this step, the ribosome changes from the pre-translocational (PRE) to the post-translocational (POST) state as the newly formed A-site-bound peptidyl-tRNA and P-site-bound deacylated tRNA move to the P and E sites, respectively. Catalyzes the coordinated movement of the two tRNA molecules, the mRNA and conformational changes in the ribosome. This Mesomycoplasma hyopneumoniae (strain J / ATCC 25934 / NCTC 10110) (Mycoplasma hyopneumoniae) protein is Elongation factor G.